The sequence spans 459 residues: Chromosomal replication initiator protein DnaA (459 aa).

Positions 1–74 are domain I, interacts with DnaA modulators; sequence MQKIETFWYF…DEMAQGHFNE (74 aa). The interval 74-122 is domain II; the sequence is EKIHFKLELKDPAEIKTATIKAPEPKSKEDKKPPTDKAHGTTARKTNPS. A disordered region spans residues 91-123; that stretch reads ATIKAPEPKSKEDKKPPTDKAHGTTARKTNPSR. A compositionally biased stretch (basic and acidic residues) spans 96–112; the sequence is PEPKSKEDKKPPTDKAH. The interval 123-339 is domain III, AAA+ region; the sequence is RLNPAFTFDA…GALKRVLAYS (217 aa). Residues G167, G169, K170, and T171 each coordinate ATP. Residues 340-459 are domain IV, binds dsDNA; the sequence is RFTGHPISLD…YSTLIHILRG (120 aa).

The protein belongs to the DnaA family. As to quaternary structure, oligomerizes as a right-handed, spiral filament on DNA at oriC.

The protein localises to the cytoplasm. Its function is as follows. Plays an essential role in the initiation and regulation of chromosomal replication. ATP-DnaA binds to the origin of replication (oriC) to initiate formation of the DNA replication initiation complex once per cell cycle. Binds the DnaA box (a 9 base pair repeat at the origin) and separates the double-stranded (ds)DNA. Forms a right-handed helical filament on oriC DNA; dsDNA binds to the exterior of the filament while single-stranded (ss)DNA is stabiized in the filament's interior. The ATP-DnaA-oriC complex binds and stabilizes one strand of the AT-rich DNA unwinding element (DUE), permitting loading of DNA polymerase. After initiation quickly degrades to an ADP-DnaA complex that is not apt for DNA replication. Binds acidic phospholipids. The protein is Chromosomal replication initiator protein DnaA of Nitrosomonas eutropha (strain DSM 101675 / C91 / Nm57).